We begin with the raw amino-acid sequence, 292 residues long: Early E4 34 kDa protein (292 aa).

It belongs to the adenoviridae E4 30 to 34 kDa protein family. As to quaternary structure, interacts with E1B-55k.

Its subcellular location is the host nucleus. The protein resides in the host cytoplasm. In terms of biological role, plays a major role to prevent cellular inhibition of viral genome replication by nuclear bodies. Assembles an SCF-like E3 ubiquitin ligase complex based on the cellular proteins ELOB, ELOC, CUL5 and RBX1, in cooperation with viral E1B-55K. This viral RING-type ligase ubiquitinates cellular substrates prior to proteasomal degradation: p53/TP53, LIG4, MRE11-RAD50-NBS1 (MRN) complex, ITGA3, DAXX and BLM. The polypeptide is Early E4 34 kDa protein (Human adenovirus D serotype 9 (HAdV-9)).